We begin with the raw amino-acid sequence, 83 residues long: Small ribosomal subunit protein bS16 (83 aa).

Belongs to the bacterial ribosomal protein bS16 family.

This Borrelia turicatae (strain 91E135) protein is Small ribosomal subunit protein bS16.